The following is a 352-amino-acid chain: Protein NDRG4 (352 aa).

A phosphoserine mark is found at K293, S298, S317, and S323. A disordered region spans residues 301 to 352 (AVPSASMTRLARSRTASLTSASSVDGSRPQPCAHSDSSEGMGQVNHTMEVSC). The segment covering 308-323 (TRLARSRTASLTSASS) has biased composition (low complexity). Positions 338-352 (SEGMGQVNHTMEVSC) are enriched in polar residues.

The protein belongs to the NDRG family. In terms of tissue distribution, predominantly expressed in the brain (at protein level). Detected in neurons of various parts of brain, including the olfactory bulb, olfactory tuberculum, cerebral cortex, striatum, hippocampus, dentate gyrus, thalamus, hypothalamus, mesencephalon, cerebellum, pons and medulla oblongata.

The protein localises to the cytoplasm. The protein resides in the cytosol. Its function is as follows. Contributes to the maintenance of intracerebral BDNF levels within the normal range, which is necessary for the preservation of spatial learning and the resistance to neuronal cell death caused by ischemic stress. May enhance growth factor-induced ERK1 and ERK2 phosphorylation. May attenuate NGF-promoted ELK1 phosphorylation in a microtubule-dependent manner. In Mus musculus (Mouse), this protein is Protein NDRG4 (Ndrg4).